The following is a 198-amino-acid chain: Pyridoxal 5'-phosphate synthase subunit PdxT (198 aa).

An L-glutamine-binding site is contributed by 50–52 (GES). Cysteine 82 serves as the catalytic Nucleophile. L-glutamine contacts are provided by residues arginine 114 and 143–144 (IR). Catalysis depends on charge relay system residues histidine 179 and glutamate 181.

This sequence belongs to the glutaminase PdxT/SNO family. As to quaternary structure, in the presence of PdxS, forms a dodecamer of heterodimers. Only shows activity in the heterodimer.

It catalyses the reaction aldehydo-D-ribose 5-phosphate + D-glyceraldehyde 3-phosphate + L-glutamine = pyridoxal 5'-phosphate + L-glutamate + phosphate + 3 H2O + H(+). The enzyme catalyses L-glutamine + H2O = L-glutamate + NH4(+). The protein operates within cofactor biosynthesis; pyridoxal 5'-phosphate biosynthesis. Functionally, catalyzes the hydrolysis of glutamine to glutamate and ammonia as part of the biosynthesis of pyridoxal 5'-phosphate. The resulting ammonia molecule is channeled to the active site of PdxS. The sequence is that of Pyridoxal 5'-phosphate synthase subunit PdxT from Metallosphaera sedula (strain ATCC 51363 / DSM 5348 / JCM 9185 / NBRC 15509 / TH2).